Here is a 368-residue protein sequence, read N- to C-terminus: 1-deoxy-D-xylulose 5-phosphate reductoisomerase (368 aa).

Residues Thr-10, Gly-11, Ser-12, Ile-13, Gln-38, and Asn-100 each contribute to the NADPH site. Lys-101 is a binding site for 1-deoxy-D-xylulose 5-phosphate. NADPH is bound at residue Glu-102. Asp-125 contributes to the Mn(2+) binding site. Positions 126, 127, 151, and 172 each coordinate 1-deoxy-D-xylulose 5-phosphate. Residue Glu-127 participates in Mn(2+) binding. An NADPH-binding site is contributed by Gly-178. 1-deoxy-D-xylulose 5-phosphate is bound by residues Ser-185, Asn-190, Lys-191, and Glu-194. Mn(2+) is bound at residue Glu-194.

Belongs to the DXR family. Mg(2+) serves as cofactor. It depends on Mn(2+) as a cofactor.

The enzyme catalyses 2-C-methyl-D-erythritol 4-phosphate + NADP(+) = 1-deoxy-D-xylulose 5-phosphate + NADPH + H(+). It functions in the pathway isoprenoid biosynthesis; isopentenyl diphosphate biosynthesis via DXP pathway; isopentenyl diphosphate from 1-deoxy-D-xylulose 5-phosphate: step 1/6. Its function is as follows. Catalyzes the NADPH-dependent rearrangement and reduction of 1-deoxy-D-xylulose-5-phosphate (DXP) to 2-C-methyl-D-erythritol 4-phosphate (MEP). The sequence is that of 1-deoxy-D-xylulose 5-phosphate reductoisomerase from Tropheryma whipplei (strain Twist) (Whipple's bacillus).